The chain runs to 219 residues: uncharacterized protein (219 aa).

The protein to T.pallidum TP_0126.

This is an uncharacterized protein from Treponema pallidum (strain Nichols).